A 356-amino-acid polypeptide reads, in one-letter code: tRNA N6-adenosine threonylcarbamoyltransferase (356 aa).

Fe cation-binding residues include histidine 115 and histidine 119. Substrate-binding positions include 138–142 (LVSGG), aspartate 171, glycine 184, and asparagine 283. Aspartate 311 provides a ligand contact to Fe cation.

The protein belongs to the KAE1 / TsaD family. Fe(2+) serves as cofactor.

It is found in the cytoplasm. It carries out the reaction L-threonylcarbamoyladenylate + adenosine(37) in tRNA = N(6)-L-threonylcarbamoyladenosine(37) in tRNA + AMP + H(+). Required for the formation of a threonylcarbamoyl group on adenosine at position 37 (t(6)A37) in tRNAs that read codons beginning with adenine. Is involved in the transfer of the threonylcarbamoyl moiety of threonylcarbamoyl-AMP (TC-AMP) to the N6 group of A37, together with TsaE and TsaB. TsaD likely plays a direct catalytic role in this reaction. This is tRNA N6-adenosine threonylcarbamoyltransferase from Prochlorococcus marinus (strain MIT 9301).